The sequence spans 446 residues: Long-chain fatty acid transport protein (446 aa).

The first 25 residues, 1–25 (MSQKTLFTKSALAVAVALISTQAWS), serve as a signal peptide directing secretion.

Belongs to the OmpP1/FadL family. In terms of assembly, has been isolated from outer membrane preparation as a homodimer.

It localises to the cell outer membrane. Functionally, involved in translocation of long-chain fatty acids across the outer membrane. It is a receptor for the bacteriophage T2. FadL may form a specific channel. The sequence is that of Long-chain fatty acid transport protein (fadL) from Escherichia coli (strain K12).